Reading from the N-terminus, the 339-residue chain is Protein RETICULATA-RELATED 2, chloroplastic (339 aa).

Residues 1–58 (MAAMAAKLHISTKSDQSNVRLPRLINLSRDPTARVLFPRNGSVSSLHTNFSSPNIMVP) constitute a chloroplast transit peptide. Positions 68-86 (IGNHGGGSGSGGGGGGYGG) are enriched in gly residues. Residues 68 to 92 (IGNHGGGSGSGGGGGGYGGSEEEES) are disordered. 2 helical membrane passes run 148-168 (FVFSTLVVGSILNFTLMYLLA) and 213-233 (VFATVGLAAGLVGTAISNGLI).

Belongs to the RETICULATA family.

The protein resides in the plastid. The protein localises to the chloroplast membrane. Functionally, may play a role in leaf development. This Arabidopsis thaliana (Mouse-ear cress) protein is Protein RETICULATA-RELATED 2, chloroplastic.